Here is a 197-residue protein sequence, read N- to C-terminus: Beta-crystallin A2 (197 aa).

The N-terminal arm stretch occupies residues 1–11; the sequence is MSGTLSQGSSP. Beta/gamma crystallin 'Greek key' domains follow at residues 12 to 52 and 53 to 99; these read ARLT…KVES and GAWV…RPLL. The segment at 100-105 is connecting peptide; the sequence is CANHSD. Beta/gamma crystallin 'Greek key' domains are found at residues 106–147 and 148–196; these read SRVT…KVTS and GAWV…RRVQ.

This sequence belongs to the beta/gamma-crystallin family. As to quaternary structure, homo/heterodimer, or complexes of higher-order. The structure of beta-crystallin oligomers seems to be stabilized through interactions between the N-terminal arms.

Functionally, crystallins are the dominant structural components of the vertebrate eye lens. The chain is Beta-crystallin A2 (CRYBA2) from Macropus fuliginosus (Western gray kangaroo).